The following is an 87-amino-acid chain: MTIKLINIGFGNIVSANRIISIVSPESAPIKRIMQEARDRNMLIDATYGRRTRAVIVTDSDHVILSAVQPETVAQRLHTKEDGVEDA.

This sequence belongs to the RemA family.

This chain is Putative regulatory protein ABC2323, found in Shouchella clausii (strain KSM-K16) (Alkalihalobacillus clausii).